The primary structure comprises 749 residues: Semaphorin-3B (749 aa).

An N-terminal signal peptide occupies residues 1-24 (MGRAGAAAVIPGLALLWAVGLGSA). The 484-residue stretch at 30-513 (RLRLSFQELQ…SRSAVAQIAL (484 aa)) folds into the Sema domain. N82 carries N-linked (GlcNAc...) asparagine glycosylation. The cysteines at positions 102 and 113 are disulfide-linked. The N-linked (GlcNAc...) asparagine glycan is linked to N124. 3 cysteine pairs are disulfide-bonded: C131–C140, C269–C380, and C293–C340. N427 carries an N-linked (GlcNAc...) asparagine glycan. 2 disulfide bridges follow: C516–C534 and C644–C710. The region spanning 573 to 659 (PALLEHKVFG…GFTQPLRRLS (87 aa)) is the Ig-like C2-type domain. The disordered stretch occupies residues 702–749 (GSANSLRMCRPQPALQSLPLESRRKGRNRRTHAPEPRAERGPRSATHW). Over residues 733-743 (HAPEPRAERGP) the composition is skewed to basic and acidic residues.

This sequence belongs to the semaphorin family. As to expression, expressed abundantly but differentially in a variety of neural and nonneural tissues.

The protein localises to the secreted. The protein resides in the endoplasmic reticulum. Inhibits axonal extension by providing local signals to specify territories inaccessible for growing axons. The protein is Semaphorin-3B (SEMA3B) of Homo sapiens (Human).